A 297-amino-acid chain; its full sequence is Ribosomal RNA small subunit methyltransferase H (297 aa).

S-adenosyl-L-methionine-binding positions include 34–36 (GGH), D54, F81, D99, and Q106.

It belongs to the methyltransferase superfamily. RsmH family.

The protein resides in the cytoplasm. It catalyses the reaction cytidine(1402) in 16S rRNA + S-adenosyl-L-methionine = N(4)-methylcytidine(1402) in 16S rRNA + S-adenosyl-L-homocysteine + H(+). Functionally, specifically methylates the N4 position of cytidine in position 1402 (C1402) of 16S rRNA. The sequence is that of Ribosomal RNA small subunit methyltransferase H from Chlamydia pneumoniae (Chlamydophila pneumoniae).